We begin with the raw amino-acid sequence, 559 residues long: Potassium-transporting ATPase potassium-binding subunit (559 aa).

13 consecutive transmembrane segments (helical) span residues 5 to 25 (GFLL…PLGS), 27 to 47 (LARL…RILW), 63 to 83 (LLAL…LLFW), 132 to 152 (GLTV…FALI), 170 to 190 (LVRI…LFFI), 253 to 273 (LAQM…FGEA), 283 to 303 (LLWA…WAEV), 327 to 347 (FGVL…CGAV), 356 to 376 (ALGG…FGGV), 379 to 399 (GLYG…LMIG), 416 to 436 (MTAL…ALAM), 484 to 504 (LLAF…MAIA), and 524 to 544 (GALF…LTFI).

The protein belongs to the KdpA family. In terms of assembly, the system is composed of three essential subunits: KdpA, KdpB and KdpC.

Its subcellular location is the cell inner membrane. Functionally, part of the high-affinity ATP-driven potassium transport (or Kdp) system, which catalyzes the hydrolysis of ATP coupled with the electrogenic transport of potassium into the cytoplasm. This subunit binds the periplasmic potassium ions and delivers the ions to the membrane domain of KdpB through an intramembrane tunnel. The protein is Potassium-transporting ATPase potassium-binding subunit of Salmonella choleraesuis (strain SC-B67).